A 304-amino-acid chain; its full sequence is Homoserine O-acetyltransferase (304 aa).

C142 functions as the Acyl-thioester intermediate in the catalytic mechanism. Residues K163 and S192 each contribute to the substrate site. H235 (proton acceptor) is an active-site residue. Residue E237 is part of the active site. A substrate-binding site is contributed by R249.

It belongs to the MetA family.

The protein resides in the cytoplasm. The enzyme catalyses L-homoserine + acetyl-CoA = O-acetyl-L-homoserine + CoA. Its pathway is amino-acid biosynthesis; L-methionine biosynthesis via de novo pathway; O-acetyl-L-homoserine from L-homoserine: step 1/1. Its function is as follows. Transfers an acetyl group from acetyl-CoA to L-homoserine, forming acetyl-L-homoserine. The sequence is that of Homoserine O-acetyltransferase from Clostridium beijerinckii (strain ATCC 51743 / NCIMB 8052) (Clostridium acetobutylicum).